The following is an 882-amino-acid chain: Holliday junction resolvase MOC1, chloroplastic (882 aa).

Disordered stretches follow at residues 87–148 (IRDG…QTPT) and 323–351 (TPAA…PRAA). Positions 91-111 (PNSNSRCSTVRTHATRSKSTG) are enriched in polar residues. A compositionally biased stretch (low complexity) spans 112–125 (PSRATSSGPATAAP). Residues 134–148 (NDTQDGGLTSEQTPT) are compositionally biased toward polar residues. Over residues 323–337 (TPAAASQTPPTTVTS) the composition is skewed to low complexity. 4 residues coordinate Mg(2+): Asp397, Glu552, Asn629, and Asp634. Residues 710 to 882 (KVERKAQARS…DGGVSGSESE (173 aa)) form a disordered region. The segment covering 732–743 (EEPEAQAEEEQA) has biased composition (acidic residues). Low complexity-rich tracts occupy residues 744 to 758 (EAGT…GAAA), 769 to 783 (VESG…VAAG), 810 to 819 (SGKSSSKAEA), and 830 to 844 (ASVG…SVGS). 2 stretches are compositionally biased toward gly residues: residues 845–857 (SSGG…GGVK) and 868–882 (AKAG…SESE).

Mg(2+) is required as a cofactor. Mn(2+) serves as cofactor.

The protein localises to the plastid. It is found in the chloroplast. The catalysed reaction is Endonucleolytic cleavage at a junction such as a reciprocal single-stranded crossover between two homologous DNA duplexes (Holliday junction).. A structure-specific endonuclease that resolves Holliday junction (HJ) intermediates during genetic recombination. Cleaves 4-way DNA junctions introducing paired nicks in opposing strands, leaving a 5'-terminal phosphate and a 3'-terminal hydroxyl group that are ligated to produce recombinant products. Mediates chloroplast nucleoid segregation during chloroplast division. In Chlamydomonas reinhardtii (Chlamydomonas smithii), this protein is Holliday junction resolvase MOC1, chloroplastic.